A 262-amino-acid polypeptide reads, in one-letter code: Octopine permease ATP-binding protein P (262 aa).

The region spanning 9 to 254 is the ABC transporter domain; that stretch reads VKLTGIRKNF…PRTERFRQFL (246 aa). An ATP-binding site is contributed by 41–48; it reads GSSGSGKS.

Belongs to the ABC transporter superfamily.

Its subcellular location is the cell inner membrane. Functionally, component of the octopine active transport system probably consisting of four subunits: Q, M, P and T. The polypeptide is Octopine permease ATP-binding protein P (occP) (Rhizobium meliloti (Ensifer meliloti)).